The primary structure comprises 302 residues: MLLFKLIVCFFFIFAIGANENKKDETSGENEPSENADVNSEASVVKEAFKKPASRKVNVKPPAAKPPAASKITKPQVPPQKKPPAPKQTTTKKPLLANIEGKIKGAANETTKYLTNLAKEMGKEAESALKEKAKEALTGLLDKADINGAFNAIASIWKNNENKPARYWKCAVENLSEETLVALGTTPYSGNVKTVLSDIPPQSTGVFVWESDSALTGAAGVVHYQLGDKILNIMASDPYDWTLYGAWANVRVSDNKETFDNLYSGKNGAQYPTKAGNWGIADGVKFFLTNNKEAEFQVIFSG.

A signal peptide spans 1–17 (MLLFKLIVCFFFIFAIG). Residues 22–93 (KKDETSGENE…PAPKQTTTKK (72 aa)) are disordered. Residues 60–75 (KPPAAKPPAASKITKP) show a composition bias toward low complexity. Residues 76–86 (QVPPQKKPPAP) show a composition bias toward pro residues. Positions 274-276 (KAG) match the Cell attachment site motif.

This sequence belongs to the actinoporin family. HALT subfamily. As to quaternary structure, octamer or nonamer in membranes. Monomer in the soluble state. In vitro, interacts with folate receptor alpha (of target organism).

The protein resides in the nematocyst. The protein localises to the secreted. It localises to the target cell membrane. In terms of biological role, pore-forming protein that forms hydrophilic pores and causes cytolysis. Compared to equinatoxin-2 (AC P61914), it reveals lower cytolysis activity (5-12-fold difference, tested on erythrocytes), a larger pore size (probably 2-3 nm) and different affinity to membrane lipids (100-fold lower affinity to sphingomyelin). Binds to sulfatides. Shows cytolytic activity on HeLa cells, with a different potency than its paralogs (from most potent to less potent: HALT-4&gt;HALT-6~HALT-1&gt;HALT-3&gt;HALT-7&gt;HALT-2). This recombinant protein has the highest cytolytic activity compared to other rHALT proteins, probably due to its longer N-terminal sequence that may penetrate the lipid bilayer more effectively. Pore formation is a multi-step process that involves specific recognition of membrane lipid by a protein aromatic residues rich region, firm binding to the membrane (mainly driven by hydrophobic interactions) accompanied by the transfer of the N-terminal region to the lipid-water interface and finally pore formation after oligomerization of monomers. In vitro, binds to the folate receptor alpha (FOLR1), a GPI-anchored membrane protein that plays a major role in the uptake of folate/folic acid into cells via endocytosis, suggesting a possible involvement of this receptor in the mechanism of HALT-1-induced cell lysis. In vivo, does not cause visible paralysis in larvae of the blowfly Sarcophaga faculata, the most common arthropod prey of Hydra. The chain is Hydra actinoporin-like toxin 4 from Hydra vulgaris (Hydra).